The chain runs to 459 residues: MVAFKFLLALSLSLLVSAAIAQTREPRLTQGQQCRFQRISGAQPSLRIQSEGGTTELWDERQEQFQCAGIVAMRSTIRPNGLSLPNYHPSPRLVYIERGQGLISIMVPGCAETYQVHRSQRTMERTEASEQQDRGSVRDLHQKVHRLRQGDIVAIPSGAAHWCYNDGSEDLVAVSINDVNHLSNQLDQKFRAFYLAGGVPRSGEQEQQARQTFHNIFRAFDAELLSEAFNVPQETIRRMQSEEEERGLIVMARERMTFVRPDEEEGEQEHRGRQLDNGLEETFCTMKFRTNVESRREADIFSRQAGRVHVVDRNKLPILKYMDLSAEKGNLYSNALVSPDWSMTGHTIVYVTRGDAQVQVVDHNGQALMNDRVNQGEMFVVPQYYTSTARAGNNGFEWVAFKTTGSPMRSPLAGYTSVIRAMPLQVITNSYQISPNQAQALKMNRGSQSFLLSPGGRRS.

A signal peptide spans 1-21 (MVAFKFLLALSLSLLVSAAIA). 2 cysteine pairs are disulfide-bonded: C34–C67 and C110–C284. Cupin type-1 domains lie at 37–237 (QRIS…ETIR) and 290–439 (TNVE…NQAQ). Residues 118-139 (RSQRTMERTEASEQQDRGSVRD) are disordered. Residues 121–139 (RTMERTEASEQQDRGSVRD) show a composition bias toward basic and acidic residues.

It belongs to the 11S seed storage protein (globulins) family. In terms of assembly, homohexamer. Each subunit is composed of an acidic and a basic chain derived from a single precursor and linked by a disulfide bond. Expressed in seeds (at protein level). Expressed in seeds.

In terms of biological role, seed storage protein. This is 11S globulin seed storage protein 2 from Sesamum indicum (Oriental sesame).